The following is a 476-amino-acid chain: MTWETVIGLEIHVQLNTKSKIFSGASTAFGAEPNAHASVVECALPGVLPVMNREVVEKAIKLGLALDAKINRKNVFDRKNYFYPDLPKGYQISQLDLPIVEHGKLEIVVGDDVKTINVTRAHMEEDAGKSVHEGLNGATGIDLNRAGTPLLEVVSEPELRSAAEAVAYAKALHSLVTWLDICDGNMAEGSFRVDANVSVRPKGQAEFGTRREIKNLNSFRFLEQAINYEAEAQIEILEDGSKVQQATMLFDPEKGETRVMRLKEDAQDYRYFPDPDLLPVIISDAQMQKAKAEMPELPKEMAARFVADYGVSEYDARLLTASRAQAAYFEEAAKASGQGKPTANWMNGELAAALNKAGLELADSPITAPRLAALVGKIADGTLSSKLAKKAFEAMWAEPESTIAEIIEKHGLQQMTDTGAVEAMVDEVLANNAKAVEQFKSGNEKALNAIVGQVMKASKGKANPAQVQELIKAKLA.

Belongs to the GatB/GatE family. GatB subfamily. In terms of assembly, heterotrimer of A, B and C subunits.

The catalysed reaction is L-glutamyl-tRNA(Gln) + L-glutamine + ATP + H2O = L-glutaminyl-tRNA(Gln) + L-glutamate + ADP + phosphate + H(+). The enzyme catalyses L-aspartyl-tRNA(Asn) + L-glutamine + ATP + H2O = L-asparaginyl-tRNA(Asn) + L-glutamate + ADP + phosphate + 2 H(+). In terms of biological role, allows the formation of correctly charged Asn-tRNA(Asn) or Gln-tRNA(Gln) through the transamidation of misacylated Asp-tRNA(Asn) or Glu-tRNA(Gln) in organisms which lack either or both of asparaginyl-tRNA or glutaminyl-tRNA synthetases. The reaction takes place in the presence of glutamine and ATP through an activated phospho-Asp-tRNA(Asn) or phospho-Glu-tRNA(Gln). In Neisseria meningitidis serogroup C / serotype 2a (strain ATCC 700532 / DSM 15464 / FAM18), this protein is Aspartyl/glutamyl-tRNA(Asn/Gln) amidotransferase subunit B.